The primary structure comprises 89 residues: UPF0147 protein TV0625 (89 aa).

Belongs to the UPF0147 family.

This is UPF0147 protein TV0625 from Thermoplasma volcanium (strain ATCC 51530 / DSM 4299 / JCM 9571 / NBRC 15438 / GSS1).